A 152-amino-acid chain; its full sequence is Large-conductance mechanosensitive channel (152 aa).

2 consecutive transmembrane segments (helical) span residues 14–34 (VIDLAVGVVIGAAFGSIVKSL) and 84–104 (VGQFINSVVSFVLIAFSVFLL).

Belongs to the MscL family. Homopentamer.

The protein resides in the cell inner membrane. Its function is as follows. Channel that opens in response to stretch forces in the membrane lipid bilayer. May participate in the regulation of osmotic pressure changes within the cell. This is Large-conductance mechanosensitive channel from Laribacter hongkongensis (strain HLHK9).